The following is a 24-amino-acid chain: Alpha-lactalbumin (24 aa).

It belongs to the glycosyl hydrolase 22 family. Lactose synthase (LS) is a heterodimer of a catalytic component, beta1,4-galactosyltransferase (beta4Gal-T1) and a regulatory component, alpha-lactalbumin (LA). In terms of processing, glycosylated (50% of the proteins). As to expression, mammary gland specific. Secreted in milk.

It localises to the secreted. Regulatory subunit of lactose synthase, changes the substrate specificity of galactosyltransferase in the mammary gland making glucose a good acceptor substrate for this enzyme. This enables LS to synthesize lactose, the major carbohydrate component of milk. In other tissues, galactosyltransferase transfers galactose onto the N-acetylglucosamine of the oligosaccharide chains in glycoproteins. This Felis catus (Cat) protein is Alpha-lactalbumin (LALBA).